Consider the following 292-residue polypeptide: Phosphatidylserine decarboxylase proenzyme (292 aa).

Active-site charge relay system; for autoendoproteolytic cleavage activity residues include Asp-89, His-146, and Ser-252. Ser-252 (schiff-base intermediate with substrate; via pyruvic acid; for decarboxylase activity) is an active-site residue. Ser-252 carries the post-translational modification Pyruvic acid (Ser); by autocatalysis.

This sequence belongs to the phosphatidylserine decarboxylase family. PSD-B subfamily. Prokaryotic type I sub-subfamily. In terms of assembly, heterodimer of a large membrane-associated beta subunit and a small pyruvoyl-containing alpha subunit. The cofactor is pyruvate. Is synthesized initially as an inactive proenzyme. Formation of the active enzyme involves a self-maturation process in which the active site pyruvoyl group is generated from an internal serine residue via an autocatalytic post-translational modification. Two non-identical subunits are generated from the proenzyme in this reaction, and the pyruvate is formed at the N-terminus of the alpha chain, which is derived from the carboxyl end of the proenzyme. The autoendoproteolytic cleavage occurs by a canonical serine protease mechanism, in which the side chain hydroxyl group of the serine supplies its oxygen atom to form the C-terminus of the beta chain, while the remainder of the serine residue undergoes an oxidative deamination to produce ammonia and the pyruvoyl prosthetic group on the alpha chain. During this reaction, the Ser that is part of the protease active site of the proenzyme becomes the pyruvoyl prosthetic group, which constitutes an essential element of the active site of the mature decarboxylase.

It is found in the cell membrane. It catalyses the reaction a 1,2-diacyl-sn-glycero-3-phospho-L-serine + H(+) = a 1,2-diacyl-sn-glycero-3-phosphoethanolamine + CO2. It participates in phospholipid metabolism; phosphatidylethanolamine biosynthesis; phosphatidylethanolamine from CDP-diacylglycerol: step 2/2. Functionally, catalyzes the formation of phosphatidylethanolamine (PtdEtn) from phosphatidylserine (PtdSer). In Shewanella sp. (strain MR-4), this protein is Phosphatidylserine decarboxylase proenzyme.